The sequence spans 322 residues: Transaldolase (322 aa).

The active-site Schiff-base intermediate with substrate is K136.

The protein belongs to the transaldolase family. Type 1 subfamily. As to quaternary structure, homodimer.

It localises to the cytoplasm. The catalysed reaction is D-sedoheptulose 7-phosphate + D-glyceraldehyde 3-phosphate = D-erythrose 4-phosphate + beta-D-fructose 6-phosphate. The protein operates within carbohydrate degradation; pentose phosphate pathway; D-glyceraldehyde 3-phosphate and beta-D-fructose 6-phosphate from D-ribose 5-phosphate and D-xylulose 5-phosphate (non-oxidative stage): step 2/3. Functionally, transaldolase is important for the balance of metabolites in the pentose-phosphate pathway. This chain is Transaldolase, found in Xanthomonas campestris pv. campestris (strain B100).